The chain runs to 88 residues: Small ribosomal subunit protein bS18 (88 aa).

The span at 1 to 11 (MTTANTTAKDN) shows a compositional bias: low complexity. The segment at 1 to 21 (MTTANTTAKDNAATKKRGRKA) is disordered.

This sequence belongs to the bacterial ribosomal protein bS18 family. As to quaternary structure, part of the 30S ribosomal subunit. Forms a tight heterodimer with protein bS6.

Functionally, binds as a heterodimer with protein bS6 to the central domain of the 16S rRNA, where it helps stabilize the platform of the 30S subunit. This is Small ribosomal subunit protein bS18 from Thermoanaerobacter pseudethanolicus (strain ATCC 33223 / 39E) (Clostridium thermohydrosulfuricum).